Here is a 233-residue protein sequence, read N- to C-terminus: Ribonuclease 3 (233 aa).

An RNase III domain is found at 4–126; it reads LNKLMERLGH…IVGAIYIDAG (123 aa). Glutamate 39 serves as a coordination point for Mg(2+). Residue aspartate 43 is part of the active site. Residues aspartate 112 and glutamate 115 each coordinate Mg(2+). Residue glutamate 115 is part of the active site. The DRBM domain occupies 153–222; the sequence is DAKSLLQEWL…AKRFLELLDD (70 aa).

This sequence belongs to the ribonuclease III family. In terms of assembly, homodimer. Mg(2+) is required as a cofactor.

The protein localises to the cytoplasm. It carries out the reaction Endonucleolytic cleavage to 5'-phosphomonoester.. Its function is as follows. Digests double-stranded RNA. Involved in the processing of primary rRNA transcript to yield the immediate precursors to the large and small rRNAs (23S and 16S). Processes some mRNAs, and tRNAs when they are encoded in the rRNA operon. Processes pre-crRNA and tracrRNA of type II CRISPR loci if present in the organism. This chain is Ribonuclease 3, found in Coxiella burnetii (strain Dugway 5J108-111).